Consider the following 718-residue polypeptide: Ribosomal RNA large subunit methyltransferase K/L (718 aa).

A THUMP domain is found at 43 to 154 (TQYRILLWSR…QDELVVSLDL (112 aa)).

The protein belongs to the methyltransferase superfamily. RlmKL family.

The protein localises to the cytoplasm. The catalysed reaction is guanosine(2445) in 23S rRNA + S-adenosyl-L-methionine = N(2)-methylguanosine(2445) in 23S rRNA + S-adenosyl-L-homocysteine + H(+). It catalyses the reaction guanosine(2069) in 23S rRNA + S-adenosyl-L-methionine = N(2)-methylguanosine(2069) in 23S rRNA + S-adenosyl-L-homocysteine + H(+). Its function is as follows. Specifically methylates the guanine in position 2445 (m2G2445) and the guanine in position 2069 (m7G2069) of 23S rRNA. This chain is Ribosomal RNA large subunit methyltransferase K/L, found in Histophilus somni (strain 129Pt) (Haemophilus somnus).